The sequence spans 436 residues: Histidinol dehydrogenase (436 aa).

3 residues coordinate NAD(+): Tyr136, Gln198, and Asn221. Residues Ser244, Gln266, and His269 each contribute to the substrate site. Gln266 and His269 together coordinate Zn(2+). Residues Glu334 and His335 each act as proton acceptor in the active site. Substrate-binding residues include His335, Asp368, Glu422, and His427. Asp368 is a binding site for Zn(2+). His427 provides a ligand contact to Zn(2+).

The protein belongs to the histidinol dehydrogenase family. Zn(2+) is required as a cofactor.

It carries out the reaction L-histidinol + 2 NAD(+) + H2O = L-histidine + 2 NADH + 3 H(+). It participates in amino-acid biosynthesis; L-histidine biosynthesis; L-histidine from 5-phospho-alpha-D-ribose 1-diphosphate: step 9/9. Catalyzes the sequential NAD-dependent oxidations of L-histidinol to L-histidinaldehyde and then to L-histidine. The sequence is that of Histidinol dehydrogenase from Dehalococcoides mccartyi (strain ATCC BAA-2266 / KCTC 15142 / 195) (Dehalococcoides ethenogenes (strain 195)).